The following is a 398-amino-acid chain: Nicotinate phosphoribosyltransferase (398 aa).

His222 carries the post-translational modification Phosphohistidine; by autocatalysis.

Belongs to the NAPRTase family. Post-translationally, transiently phosphorylated on a His residue during the reaction cycle. Phosphorylation strongly increases the affinity for substrates and increases the rate of nicotinate D-ribonucleotide production. Dephosphorylation regenerates the low-affinity form of the enzyme, leading to product release.

It catalyses the reaction nicotinate + 5-phospho-alpha-D-ribose 1-diphosphate + ATP + H2O = nicotinate beta-D-ribonucleotide + ADP + phosphate + diphosphate. It participates in cofactor biosynthesis; NAD(+) biosynthesis; nicotinate D-ribonucleotide from nicotinate: step 1/1. In terms of biological role, catalyzes the synthesis of beta-nicotinate D-ribonucleotide from nicotinate and 5-phospho-D-ribose 1-phosphate at the expense of ATP. This is Nicotinate phosphoribosyltransferase from Acidovorax ebreus (strain TPSY) (Diaphorobacter sp. (strain TPSY)).